Consider the following 280-residue polypeptide: Gem-associated protein 2 (280 aa).

Positions 1 to 39 (MRRAELAGLKTMAWVPAESAVEELMPRLLPVEPCDLTEG) are may play a minor inhibitory role in snRNA binding to 5Sm (SNRPD1, SNRPD2, SNRPE, SNRPF and SNRPG) during snRNP assembly by inserting into the RNA binding pocket of 5Sm. Phosphoserine occurs at positions 81 and 166.

Belongs to the gemin-2 family. In terms of assembly, monomer. Part of the core SMN complex that contains SMN1, GEMIN2/SIP1, DDX20/GEMIN3, GEMIN4, GEMIN5, GEMIN6, GEMIN7, GEMIN8 and STRAP/UNRIP. Part of the SMN-Sm complex that contains SMN1, GEMIN2/SIP1, DDX20/GEMIN3, GEMIN4, GEMIN5, GEMIN6, GEMIN7, GEMIN8, STRAP/UNRIP and the Sm proteins SNRPB, SNRPD1, SNRPD2, SNRPD3, SNRPE, SNRPF and SNRPG. Interacts with GEMIN5; the interaction is direct. Interacts (via C-terminus) with SMN1; the interaction is direct. Interacts with SNRPD1; the interaction is direct. Interacts with SNRPD2; the interaction is direct. Interacts (via N-terminus) with SNRPF; the interaction is direct. Interacts (via N-terminus) with SNRPE; the interaction is direct. Interacts (via N-terminus) with SNRPG; the interaction is direct.

The protein resides in the nucleus. The protein localises to the gem. Its subcellular location is the cytoplasm. Functionally, the SMN complex catalyzes the assembly of small nuclear ribonucleoproteins (snRNPs), the building blocks of the spliceosome, and thereby plays an important role in the splicing of cellular pre-mRNAs. Most spliceosomal snRNPs contain a common set of Sm proteins SNRPB, SNRPD1, SNRPD2, SNRPD3, SNRPE, SNRPF and SNRPG that assemble in a heptameric protein ring on the Sm site of the small nuclear RNA to form the core snRNP (Sm core). In the cytosol, the Sm proteins SNRPD1, SNRPD2, SNRPE, SNRPF and SNRPG (5Sm) are trapped in an inactive 6S pICln-Sm complex by the chaperone CLNS1A that controls the assembly of the core snRNP. To assemble core snRNPs, the SMN complex accepts the trapped 5Sm proteins from CLNS1A. Binding of snRNA inside 5Sm ultimately triggers eviction of the SMN complex, thereby allowing binding of SNRPD3 and SNRPB to complete assembly of the core snRNP. Within the SMN complex, GEMIN2 constrains the conformation of 5Sm, thereby promoting 5Sm binding to snRNA containing the snRNP code (a nonameric Sm site and a 3'-adjacent stem-loop), thus preventing progression of assembly until a cognate substrate is bound. The chain is Gem-associated protein 2 from Homo sapiens (Human).